Reading from the N-terminus, the 1152-residue chain is DNA-directed RNA polymerase subunit beta' (1152 aa).

The Zn(2+) site is built by C60, C62, C75, and C78. Mg(2+)-binding residues include D449, D451, and D453. Residues C779, C853, C860, and C863 each contribute to the Zn(2+) site.

This sequence belongs to the RNA polymerase beta' chain family. The RNAP catalytic core consists of 2 alpha, 1 beta, 1 beta' and 1 omega subunit. When a sigma factor is associated with the core the holoenzyme is formed, which can initiate transcription. The cofactor is Mg(2+). It depends on Zn(2+) as a cofactor.

It carries out the reaction RNA(n) + a ribonucleoside 5'-triphosphate = RNA(n+1) + diphosphate. In terms of biological role, DNA-dependent RNA polymerase catalyzes the transcription of DNA into RNA using the four ribonucleoside triphosphates as substrates. The protein is DNA-directed RNA polymerase subunit beta' of Carboxydothermus hydrogenoformans (strain ATCC BAA-161 / DSM 6008 / Z-2901).